The chain runs to 101 residues: Aspartyl/glutamyl-tRNA(Asn/Gln) amidotransferase subunit C (101 aa).

This sequence belongs to the GatC family. In terms of assembly, heterotrimer of A, B and C subunits.

The catalysed reaction is L-glutamyl-tRNA(Gln) + L-glutamine + ATP + H2O = L-glutaminyl-tRNA(Gln) + L-glutamate + ADP + phosphate + H(+). The enzyme catalyses L-aspartyl-tRNA(Asn) + L-glutamine + ATP + H2O = L-asparaginyl-tRNA(Asn) + L-glutamate + ADP + phosphate + 2 H(+). Functionally, allows the formation of correctly charged Asn-tRNA(Asn) or Gln-tRNA(Gln) through the transamidation of misacylated Asp-tRNA(Asn) or Glu-tRNA(Gln) in organisms which lack either or both of asparaginyl-tRNA or glutaminyl-tRNA synthetases. The reaction takes place in the presence of glutamine and ATP through an activated phospho-Asp-tRNA(Asn) or phospho-Glu-tRNA(Gln). The polypeptide is Aspartyl/glutamyl-tRNA(Asn/Gln) amidotransferase subunit C (Lactobacillus delbrueckii subsp. bulgaricus (strain ATCC 11842 / DSM 20081 / BCRC 10696 / JCM 1002 / NBRC 13953 / NCIMB 11778 / NCTC 12712 / WDCM 00102 / Lb 14)).